Here is a 122-residue protein sequence, read N- to C-terminus: Large ribosomal subunit protein bL12 (122 aa).

Belongs to the bacterial ribosomal protein bL12 family. In terms of assembly, homodimer. Part of the ribosomal stalk of the 50S ribosomal subunit. Forms a multimeric L10(L12)X complex, where L10 forms an elongated spine to which 2 to 4 L12 dimers bind in a sequential fashion. Binds GTP-bound translation factors.

Forms part of the ribosomal stalk which helps the ribosome interact with GTP-bound translation factors. Is thus essential for accurate translation. The chain is Large ribosomal subunit protein bL12 from Blochmanniella pennsylvanica (strain BPEN).